The primary structure comprises 565 residues: Glycine/sarcosine/dimethylglycine N-methyltransferase (565 aa).

Over residues 1 to 10 (MTKSVDDLAR) the composition is skewed to basic and acidic residues. The disordered stretch occupies residues 1–34 (MTKSVDDLARGDQAGDEQDPVHREQQTFGDNPLE). S-adenosyl-L-methionine contacts are provided by residues Tyr-45, Trp-53, Arg-62, Ala-86, Asp-107, 134–135 (DW), and Leu-152. Positions 154, 187, and 226 each coordinate substrate.

This sequence belongs to the class I-like SAM-binding methyltransferase superfamily. Glycine N-methyltransferase family. Monomer.

The enzyme catalyses glycine + 2 S-adenosyl-L-methionine = N,N-dimethylglycine + 2 S-adenosyl-L-homocysteine + 2 H(+). It carries out the reaction sarcosine + 2 S-adenosyl-L-methionine = glycine betaine + 2 S-adenosyl-L-homocysteine + 2 H(+). It catalyses the reaction glycine + S-adenosyl-L-methionine = sarcosine + S-adenosyl-L-homocysteine + H(+). The catalysed reaction is sarcosine + S-adenosyl-L-methionine = N,N-dimethylglycine + S-adenosyl-L-homocysteine + H(+). The enzyme catalyses N,N-dimethylglycine + S-adenosyl-L-methionine = glycine betaine + S-adenosyl-L-homocysteine + H(+). The protein operates within amine and polyamine biosynthesis; betaine biosynthesis via glycine pathway; betaine from glycine: step 1/3. It functions in the pathway amine and polyamine biosynthesis; betaine biosynthesis via glycine pathway; betaine from glycine: step 2/3. It participates in amine and polyamine biosynthesis; betaine biosynthesis via glycine pathway; betaine from glycine: step 3/3. Catalyzes the methylation of glycine, sarcosine and dimethylglycine to sarcosine, dimethylglycine and betaine, respectively, with S-adenosylmethionine (AdoMet) acting as the methyl donor. Shows low level of activity on glycine when expressed in E.coli. The protein is Glycine/sarcosine/dimethylglycine N-methyltransferase of Actinopolyspora halophila.